A 28-amino-acid polypeptide reads, in one-letter code: Dermaseptin-SP1 (28 aa).

As to expression, expressed by the skin glands.

It is found in the secreted. Functionally, probable antimicrobial peptide which stimulates insulin-release in glucose-responsive BRIN-BD 11 cells. The sequence is that of Dermaseptin-SP1 from Agalychnis spurrelli (Gliding leaf frog).